Consider the following 640-residue polypeptide: Protein argonaute (640 aa).

Residues 1–100 (MYLNLYEIKI…YIKKKFIDNN (100 aa)) form an N-terminal domain region. A linker L1 region spans residues 101–153 (FYYKRGNNYISINDKFPLDSNTNVNAHLTYKIKLYKINERYYISVLPKFTFLS). The segment at 154–209 (DKPALESPIKSTYLFNIKSGKTFPYISGLNGVLKIDLGENGIKEVLFPENYYFNFT) is PAZ domain. Residues 210–291 (SKEAEKFGFS…KYSFYKNDQK (82 aa)) form a linker L2 region. Positions 292–423 (IKIAFFFSSK…YVYKMGNFIP (132 aa)) are mid domain. The segment at 424 to 640 (ECQPYVIRNL…EWKLYIPYMK (217 aa)) is PIWI domain. Active-site residues include D445, E481, D515, and N623. D445 contributes to the Mn(2+) binding site. Residues D515 and N623 each contribute to the Mn(2+) site.

The protein belongs to the argonaute family. Long pAgo subfamily. The cofactor is Mn(2+).

Functionally, a highly versatile argonaute that uses 5'-phospho- and 5'-OH- guide RNA (gRNA) or DNA (gDNA) to cleave target RNA or ssDNA (tDNA) in all possible combinations; has no detectable activity in the absence of guide. Uses short guide sequences (18-21 nucleotides (nt) on average) to bind complementary target nucleic acids resulting in target cleavage in a site-specific manner. Using 5'-phospho-gRNA or 5'-OH-gRNA the cleavage site is 10 nt downstream of the target residue base-paired with the 5'-end of the gRNA, using 5'-phospho-gDNA the cleavage site is 11 nucleotides (nt) downstream, while with 5'-OH-gDNA the cleavage site is 9 nt downstream. This is Protein argonaute from Marinitoga hydrogenitolerans (strain DSM 16785 / JCM 12826 / AT1271).